Consider the following 359-residue polypeptide: 3-dehydroquinate synthase (359 aa).

NAD(+)-binding positions include 71-76 (DGEAHK), 105-109 (GVIGD), 129-130 (TT), Lys-142, Lys-151, and 169-172 (TLHT). The Zn(2+) site is built by Glu-184, His-247, and His-264.

This sequence belongs to the sugar phosphate cyclases superfamily. Dehydroquinate synthase family. Co(2+) is required as a cofactor. The cofactor is Zn(2+). Requires NAD(+) as cofactor.

It localises to the cytoplasm. The catalysed reaction is 7-phospho-2-dehydro-3-deoxy-D-arabino-heptonate = 3-dehydroquinate + phosphate. It functions in the pathway metabolic intermediate biosynthesis; chorismate biosynthesis; chorismate from D-erythrose 4-phosphate and phosphoenolpyruvate: step 2/7. Catalyzes the conversion of 3-deoxy-D-arabino-heptulosonate 7-phosphate (DAHP) to dehydroquinate (DHQ). This is 3-dehydroquinate synthase from Neisseria gonorrhoeae (strain ATCC 700825 / FA 1090).